A 76-amino-acid polypeptide reads, in one-letter code: Defensin-like protein 164 (76 aa).

The first 25 residues, 1–25 (MAKLLCSYLFICMFVLSGFLVFSSA), serve as a signal peptide directing secretion. Intrachain disulfides connect Cys31–Cys76, Cys41–Cys61, Cys46–Cys70, and Cys50–Cys72.

The protein belongs to the DEFL family.

The protein resides in the secreted. The sequence is that of Defensin-like protein 164 (LCR38) from Arabidopsis thaliana (Mouse-ear cress).